Reading from the N-terminus, the 268-residue chain is WUSCHEL-related homeobox 11 (268 aa).

The segment at 1-35 is disordered; that stretch reads MDQEQTPHSPTRHSRSPPSSASGSTSAEPVRSRWS. The segment covering 16–27 has biased composition (low complexity); that stretch reads SPPSSASGSTSA. The homeobox; WUS-type DNA-binding region spans 29–93; it reads PVRSRWSPKP…NRRSRSRRRQ (65 aa).

It belongs to the WUS homeobox family.

The protein localises to the nucleus. In terms of biological role, transcription factor which may be involved in developmental processes. This is WUSCHEL-related homeobox 11 (WOX11) from Arabidopsis thaliana (Mouse-ear cress).